The primary structure comprises 282 residues: MSKEVSVEGEQPPVKDYTDPPPEPLLNFGELRLWSFYRALIAEFVATLLFLYVTIATVIGHKEQNAADQCSGVGLLGIAWAFGGMIFILVYCTAGISGGHINPAVTLGLFLARKVSLIRALLYMVAQCLGAIVGVGIVKGIMKHQYNSLGGGANVVAAGYSKGTALGAEIIGTFVLVYTVFSATDPKRSARDSHVPVLAPLPIGFAVFMVHLATIPITGTGINPARSLGAAVIYNQDKPWDDHWILWVGPFVGALAAAAYHQYILRAAAIKALGSFRSNPSN.

The interval methionine 1–proline 21 is disordered. Topologically, residues methionine 1–arginine 38 are cytoplasmic. Residues alanine 39–isoleucine 59 form a helical membrane-spanning segment. Residues glycine 60–serine 71 lie on the Extracellular side of the membrane. Residues glycine 72–cysteine 92 traverse the membrane as a helical segment. At threonine 93–alanine 120 the chain is on the cytoplasmic side. The short motif at asparagine 102 to alanine 104 is the NPA 1 element. Residues leucine 121–isoleucine 141 traverse the membrane as a helical segment. Over methionine 142–lysine 162 the chain is Extracellular. Residues glycine 163–alanine 183 traverse the membrane as a helical segment. Residues threonine 184–proline 196 are Cytoplasmic-facing. Residues valine 197–isoleucine 217 traverse the membrane as a helical segment. Topologically, residues threonine 218–tryptophan 244 are extracellular. Residues asparagine 223–alanine 225 carry the NPA 2 motif. A helical transmembrane segment spans residues isoleucine 245–leucine 265. At arginine 266–asparagine 282 the chain is on the cytoplasmic side.

The protein belongs to the MIP/aquaporin (TC 1.A.8) family. PIP (TC 1.A.8.11) subfamily. In terms of tissue distribution, expressed in roots, leaves and fruits.

The protein localises to the cell membrane. Its function is as follows. Water channel required to facilitate the transport of water across cell membrane; mercury-insensitive. Contributes to the tolerance to multiple abiotic stresses including salt (NaCl), cold and water deprivation, by modulating cytosolic K(+)/Na(+) ratio, maintaining osmotic balance, and reducing membrane injury (e.g. oxidative injury). Also regulates the expression of abscisic acid (ABA)- biosynthetic and -responsive genes during dehydration and salt stresses. This Musa acuminata (Banana) protein is Aquaporin PIP2-7.